The following is a 356-amino-acid chain: Glucose 1-dehydrogenase (356 aa).

Positions 1-26 are disordered; the sequence is MDAIVVSKADRTPRLVDRPRPDPTPG. Residues 8-21 are compositionally biased toward basic and acidic residues; the sequence is KADRTPRLVDRPRP. D38 is a Zn(2+) binding site. T40 contributes to the substrate binding site. Positions 63 and 64 each coordinate Zn(2+). Positions 86–107 are disordered; it reads TVRRPRGDPTPQFDRGQPDMAA. E113 and E149 together coordinate substrate. E149 contributes to the Zn(2+) binding site. NADP(+)-binding positions include 180-183, 205-206, 270-272, and 300-302; these read NGSL, RR, LGV, and SVN. N302 is a binding site for substrate.

It belongs to the zinc-containing alcohol dehydrogenase family. Glucose 1-dehydrogenase subfamily. Zn(2+) serves as cofactor.

The catalysed reaction is D-glucose + NAD(+) = D-glucono-1,5-lactone + NADH + H(+). It catalyses the reaction D-glucose + NADP(+) = D-glucono-1,5-lactone + NADPH + H(+). In terms of biological role, catalyzes the NAD(P)(+)-dependent oxidation of D-glucose to D-gluconate via gluconolactone. Can utilize both NAD(+) and NADP(+) as electron acceptor. Is involved in the degradation of glucose through a modified Entner-Doudoroff pathway. This chain is Glucose 1-dehydrogenase, found in Halobacterium salinarum (strain ATCC 700922 / JCM 11081 / NRC-1) (Halobacterium halobium).